Consider the following 141-residue polypeptide: Hemoglobin subunit alpha-A (141 aa).

Residues 1–141 (VLSAADKANV…VGAVLTAKYR (141 aa)) enclose the Globin domain. Residue His58 coordinates O2. A heme b-binding site is contributed by His87.

Belongs to the globin family. Heterotetramer of two alpha chains and two beta chains. In terms of tissue distribution, red blood cells.

In terms of biological role, involved in oxygen transport from the lung to the various peripheral tissues. The polypeptide is Hemoglobin subunit alpha-A (HBAA) (Chloephaga melanoptera (Andean goose)).